A 73-amino-acid polypeptide reads, in one-letter code: Large ribosomal subunit protein bL31 (73 aa).

Residues cysteine 16, cysteine 18, cysteine 37, and cysteine 40 each coordinate Zn(2+).

The protein belongs to the bacterial ribosomal protein bL31 family. Type A subfamily. Part of the 50S ribosomal subunit. Zn(2+) is required as a cofactor.

Functionally, binds the 23S rRNA. In Pseudomonas syringae pv. syringae (strain B728a), this protein is Large ribosomal subunit protein bL31.